The chain runs to 293 residues: Undecaprenyl-diphosphatase (293 aa).

A run of 6 helical transmembrane segments spans residues 74 to 94, 107 to 127, 134 to 154, 209 to 229, 243 to 263, and 271 to 291; these read VLVFFAKEIWQIITGWFAGVF, WMIIVATIPVVILGVLGKDLI, MWITASVLILFSLVFILAEKM, FLLAIPAVLGSGLYSLPDAFA, VGTLFAFVVGYISIAWLMKFV, and FAAYRIPAGLLVMLLLALGML.

Belongs to the UppP family.

It is found in the cell membrane. The catalysed reaction is di-trans,octa-cis-undecaprenyl diphosphate + H2O = di-trans,octa-cis-undecaprenyl phosphate + phosphate + H(+). Functionally, catalyzes the dephosphorylation of undecaprenyl diphosphate (UPP). Confers resistance to bacitracin. This chain is Undecaprenyl-diphosphatase, found in Corynebacterium glutamicum (strain R).